The sequence spans 505 residues: Putative ribose/galactose/methyl galactoside import ATP-binding protein 1 (505 aa).

ABC transporter domains lie at 10–245 and 256–501; these read LRLE…VGRS and RPTD…SGYG. 42 to 49 contacts ATP; that stretch reads GENGAGKS.

This sequence belongs to the ABC transporter superfamily. Carbohydrate importer 2 (CUT2) (TC 3.A.1.2) family.

The protein localises to the cell inner membrane. The enzyme catalyses D-ribose(out) + ATP + H2O = D-ribose(in) + ADP + phosphate + H(+). It catalyses the reaction D-galactose(out) + ATP + H2O = D-galactose(in) + ADP + phosphate + H(+). Part of an ABC transporter complex involved in carbohydrate import. Could be involved in ribose, galactose and/or methyl galactoside import. Responsible for energy coupling to the transport system. In Agrobacterium fabrum (strain C58 / ATCC 33970) (Agrobacterium tumefaciens (strain C58)), this protein is Putative ribose/galactose/methyl galactoside import ATP-binding protein 1.